The primary structure comprises 35 residues: Photosystem II reaction center protein M (35 aa).

The helical transmembrane segment at Ile-5–Leu-25 threads the bilayer.

It belongs to the PsbM family. In terms of assembly, PSII is composed of 1 copy each of membrane proteins PsbA, PsbB, PsbC, PsbD, PsbE, PsbF, PsbH, PsbI, PsbJ, PsbK, PsbL, PsbM, PsbT, PsbX, PsbY, PsbZ, Psb30/Ycf12, at least 3 peripheral proteins of the oxygen-evolving complex and a large number of cofactors. It forms dimeric complexes.

It localises to the plastid. Its subcellular location is the chloroplast thylakoid membrane. In terms of biological role, one of the components of the core complex of photosystem II (PSII). PSII is a light-driven water:plastoquinone oxidoreductase that uses light energy to abstract electrons from H(2)O, generating O(2) and a proton gradient subsequently used for ATP formation. It consists of a core antenna complex that captures photons, and an electron transfer chain that converts photonic excitation into a charge separation. This subunit is found at the monomer-monomer interface. The protein is Photosystem II reaction center protein M of Chara vulgaris (Common stonewort).